Reading from the N-terminus, the 206-residue chain is High frequency lysogenization protein HflD homolog (206 aa).

It belongs to the HflD family.

It is found in the cytoplasm. The protein resides in the cell inner membrane. This chain is High frequency lysogenization protein HflD homolog, found in Pseudomonas paraeruginosa (strain DSM 24068 / PA7) (Pseudomonas aeruginosa (strain PA7)).